A 476-amino-acid polypeptide reads, in one-letter code: Riboflavin transporter rft-2 (476 aa).

A helical transmembrane segment spans residues 1–21 (MGCSAATFILVALFGSSSWMG). The Cytoplasmic segment spans residues 22-41 (TNSVWMQLPLLTSELPEQWN). The chain crosses the membrane as a helical span at residues 42–62 (LPSYLAGVVQIACIVPLIYTI). The Extracellular segment spans residues 63 to 75 (LHKGVKSFTIPTA). The helical transmembrane segment at 76 to 96 (PLIIALLSLACCCQLGLSFFW) threads the bilayer. The Cytoplasmic portion of the chain corresponds to 97-113 (SDYSEIFGAPRSWPLYS). The chain crosses the membrane as a helical span at residues 114-134 (LLFGLAIVNAMSNVLFMPFMA). Over 135–140 (QFHPAY) the chain is Extracellular. The chain crosses the membrane as a helical span at residues 141–161 (LNAYFVGMGLSSLAPSLLSLA). The Cytoplasmic segment spans residues 162 to 185 (QGTSMFKCDEKGVAERFPPNFSVS). Residues 186–206 (IFFFVIFSFTCVALFAFIALY) traverse the membrane as a helical segment. Topologically, residues 207–306 (RSGAHTHFAT…HPVDYITGVK (100 aa)) are extracellular. Residues 215–249 (ATPNKKEPNEGTPLKKDLNNTSSSRKGDDEDESPI) form a disordered region. Positions 218–232 (NKKEPNEGTPLKKDL) are enriched in basic and acidic residues. N233 carries N-linked (GlcNAc...) asparagine glycosylation. A helical transmembrane segment spans residues 307-327 (FTFLLFTTALVNAQMNGIITS). Residues 328 to 342 (VQSYAALPYSQATYH) are Cytoplasmic-facing. The chain crosses the membrane as a helical span at residues 343-363 (FAVTLSNVVSPLSSFLPFFIS). The Extracellular portion of the chain corresponds to 364–366 (VRS). The chain crosses the membrane as a helical span at residues 367–387 (IPVLAILTACSTAMTAFIVYL). At 388–393 (AALSPN) the chain is on the cytoplasmic side. The chain crosses the membrane as a helical span at residues 394–414 (LIFNSVTIGSALSIGGSLIAA). The Extracellular segment spans residues 415 to 437 (GLHSYLRVVFASLLREGHQSESR). A helical transmembrane segment spans residues 438 to 458 (LFWCGVFIQIGSFIGSAVMFP). At 459–476 (LVNIAHLFTSAPQCKSIS) the chain is on the cytoplasmic side.

This sequence belongs to the riboflavin transporter family. Expressed in intestine and pharynx.

It is found in the cell membrane. The catalysed reaction is riboflavin(in) = riboflavin(out). In terms of biological role, riboflavin transporter. This Caenorhabditis elegans protein is Riboflavin transporter rft-2.